We begin with the raw amino-acid sequence, 381 residues long: Cytochrome b (381 aa).

Transmembrane regions (helical) follow at residues 31–51 (FGFL…FLAM), 75–97 (WLLR…IHIF), 112–132 (VWVI…IGYV), and 178–198 (FFSL…VHLA). 2 residues coordinate heme b: histidine 81 and histidine 95. Heme b is bound by residues histidine 182 and histidine 196. Residue histidine 201 coordinates a ubiquinone. The next 4 membrane-spanning stretches (helical) occupy residues 224-244 (FIVK…IFVY), 288-308 (LGGV…PWIH), 320-340 (LYRL…WIGG), and 347-367 (YVII…ILLP).

Belongs to the cytochrome b family. The main subunits of complex b-c1 are: cytochrome b, cytochrome c1 and the Rieske protein. Heme b is required as a cofactor.

Its subcellular location is the mitochondrion inner membrane. Functionally, component of the ubiquinol-cytochrome c reductase complex (complex III or cytochrome b-c1 complex) that is part of the mitochondrial respiratory chain. The b-c1 complex mediates electron transfer from ubiquinol to cytochrome c. Contributes to the generation of a proton gradient across the mitochondrial membrane that is then used for ATP synthesis. The sequence is that of Cytochrome b (MT-CYB) from Chondrus crispus (Carrageen Irish moss).